The primary structure comprises 201 residues: Recombination protein RecR (201 aa).

Residues 57-72 form a C4-type zinc finger; that stretch reads CADCRTFTEQEICTIC. The Toprim domain maps to 81–176; the sequence is GLICVVESPA…DASRIAHGVP (96 aa).

The protein belongs to the RecR family.

In terms of biological role, may play a role in DNA repair. It seems to be involved in an RecBC-independent recombinational process of DNA repair. It may act with RecF and RecO. The chain is Recombination protein RecR from Erwinia tasmaniensis (strain DSM 17950 / CFBP 7177 / CIP 109463 / NCPPB 4357 / Et1/99).